A 108-amino-acid polypeptide reads, in one-letter code: Replication initiation control protein YabA (108 aa).

H83, C85, C99, and C102 together coordinate Zn(2+).

Belongs to the YabA family. In terms of assembly, homotetramer. Interacts with both DnaA and DnaN, acting as a bridge between these two proteins. Zn(2+) is required as a cofactor.

It localises to the cytoplasm. The protein localises to the nucleoid. Involved in control of chromosome replication initiation. Inhibits the cooperative binding of DnaA to the oriC region, thus negatively regulating initiation of chromosome replication. Inhibits the ability of DnaA-ATP to form a helix on DNA; does not disassemble preformed DnaA-DNA helices. Decreases the residence time of DnaA on the chromosome at its binding sites (oriC, replication forks and promoter-binding sites). Tethers DnaA to the replication machinery via the DNA polymerase beta sliding clamp subunit (dnaN). Associates with oriC and other DnaA targets on the chromosome in a DnaA-dependent manner. This chain is Replication initiation control protein YabA, found in Lactococcus lactis subsp. lactis (strain IL1403) (Streptococcus lactis).